A 192-amino-acid chain; its full sequence is Phosphoheptose isomerase (192 aa).

The SIS domain occupies leucine 37 to lysine 192. Asparagine 52 to glycine 54 contacts substrate. Zn(2+) is bound by residues histidine 61 and glutamate 65. Substrate is bound by residues glutamate 65, asparagine 93–aspartate 94, serine 119–serine 121, serine 124, and glutamine 172. Positions 172 and 180 each coordinate Zn(2+).

It belongs to the SIS family. GmhA subfamily. In terms of assembly, homotetramer. Zn(2+) serves as cofactor.

It localises to the cytoplasm. The enzyme catalyses 2 D-sedoheptulose 7-phosphate = D-glycero-alpha-D-manno-heptose 7-phosphate + D-glycero-beta-D-manno-heptose 7-phosphate. It participates in carbohydrate biosynthesis; D-glycero-D-manno-heptose 7-phosphate biosynthesis; D-glycero-alpha-D-manno-heptose 7-phosphate and D-glycero-beta-D-manno-heptose 7-phosphate from sedoheptulose 7-phosphate: step 1/1. Its function is as follows. Catalyzes the isomerization of sedoheptulose 7-phosphate in D-glycero-D-manno-heptose 7-phosphate. The chain is Phosphoheptose isomerase from Salmonella agona (strain SL483).